The primary structure comprises 410 residues: Transcription termination factor, mitochondrial (410 aa).

Residues 1–44 (MIRSLLRSFETALKLHAGLNMHPMHCSRRLLFSQYENRASPSRL) constitute a mitochondrion transit peptide.

It belongs to the mTERF family.

The protein resides in the mitochondrion. Transcription termination factor. Binds promoter DNA and regulates mitochondrial replication and transcription. Transcription termination activity may be polarized with highest termination activity occurring when its DNA-binding site is positioned in the reverse orientation with respect to the incoming RNA polymerase. Required for normal topology and maintenance of mitochondrial DNA (mtDNA) levels. Regulates mtDNA replication by promoting replication pausing, possibly by acting as a natural barrier to replication fork progression. Its function in replication pausing prevents unregulated replication that may occur for example by collisions between the machineries of DNA replication and transcription during mtDNA synthesis. This ensures the incorporation of RNA transcripts into replication intermediates at the replication fork and allow for proper fork progression. Shares mtDNA binding sites with the mitochondrial termination factor mTerf5 and thereby may antagonize mTerf5 function during replication to regulate pausing. Likely to function downstream of Dref which activates genes involved in mtDNA replication and maintenance. This is Transcription termination factor, mitochondrial from Drosophila melanogaster (Fruit fly).